A 303-amino-acid polypeptide reads, in one-letter code: Probable 5-dehydro-4-deoxyglucarate dehydratase (303 aa).

It belongs to the DapA family.

It carries out the reaction 5-dehydro-4-deoxy-D-glucarate + H(+) = 2,5-dioxopentanoate + CO2 + H2O. It functions in the pathway carbohydrate acid metabolism; D-glucarate degradation; 2,5-dioxopentanoate from D-glucarate: step 2/2. This Pseudomonas syringae pv. tomato (strain ATCC BAA-871 / DC3000) protein is Probable 5-dehydro-4-deoxyglucarate dehydratase.